We begin with the raw amino-acid sequence, 236 residues long: Glucosamine-6-phosphate deaminase (236 aa).

Catalysis depends on Asp-62, which acts as the Proton acceptor; for enolization step. The For ring-opening step role is filled by Asn-128. The Proton acceptor; for ring-opening step role is filled by His-130. The active-site For ring-opening step is the Glu-135.

It belongs to the glucosamine/galactosamine-6-phosphate isomerase family. NagB subfamily.

The catalysed reaction is alpha-D-glucosamine 6-phosphate + H2O = beta-D-fructose 6-phosphate + NH4(+). It participates in amino-sugar metabolism; N-acetylneuraminate degradation; D-fructose 6-phosphate from N-acetylneuraminate: step 5/5. In terms of biological role, catalyzes the reversible isomerization-deamination of glucosamine 6-phosphate (GlcN6P) to form fructose 6-phosphate (Fru6P) and ammonium ion. This is Glucosamine-6-phosphate deaminase from Lacticaseibacillus paracasei (strain ATCC 334 / BCRC 17002 / CCUG 31169 / CIP 107868 / KCTC 3260 / NRRL B-441) (Lactobacillus paracasei).